The sequence spans 118 residues: Pterin-4-alpha-carbinolamine dehydratase (118 aa).

This sequence belongs to the pterin-4-alpha-carbinolamine dehydratase family.

The enzyme catalyses (4aS,6R)-4a-hydroxy-L-erythro-5,6,7,8-tetrahydrobiopterin = (6R)-L-erythro-6,7-dihydrobiopterin + H2O. In terms of biological role, involved in tetrahydrobiopterin biosynthesis. Seems to both prevent the formation of 7-pterins and accelerate the formation of quinonoid-BH2. May also have a positive regulatory role in the expression of phhA. The sequence is that of Pterin-4-alpha-carbinolamine dehydratase (phhB) from Pseudomonas syringae pv. tomato (strain ATCC BAA-871 / DC3000).